The primary structure comprises 502 residues: Lysine--tRNA ligase (502 aa).

2 residues coordinate Mg(2+): glutamate 403 and glutamate 410.

It belongs to the class-II aminoacyl-tRNA synthetase family. In terms of assembly, homodimer. Mg(2+) is required as a cofactor.

The protein resides in the cytoplasm. The catalysed reaction is tRNA(Lys) + L-lysine + ATP = L-lysyl-tRNA(Lys) + AMP + diphosphate. This chain is Lysine--tRNA ligase, found in Parasynechococcus marenigrum (strain WH8102).